The sequence spans 431 residues: Translation initiation factor 2 subunit gamma (431 aa).

A tr-type G domain is found at 26–223 (QPCVNIGMVG…ALETQIPTPS (198 aa)). Positions 35–42 (GHVDHGKT) are G1. Residues Asp-38, Thr-42, Gly-63, and Ser-65 each coordinate Mg(2+). 38–43 (DHGKTT) is a GTP binding site. A G2 region spans residues 63 to 67 (GISIR). Zn(2+) contacts are provided by Cys-78, Cys-81, Cys-93, and Cys-96. A G3 region spans residues 110–113 (DAPG). GTP contacts are provided by residues 166–169 (NKID) and 201–203 (SAQ). The segment at 166–169 (NKID) is G4. A G5 region spans residues 201–203 (SAQ).

The protein belongs to the TRAFAC class translation factor GTPase superfamily. Classic translation factor GTPase family. EIF2G subfamily. In terms of assembly, heterotrimer composed of an alpha, a beta and a gamma chain. Requires Mg(2+) as cofactor.

The enzyme catalyses GTP + H2O = GDP + phosphate + H(+). Its function is as follows. eIF-2 functions in the early steps of protein synthesis by forming a ternary complex with GTP and initiator tRNA. The chain is Translation initiation factor 2 subunit gamma from Methanosarcina mazei (strain ATCC BAA-159 / DSM 3647 / Goe1 / Go1 / JCM 11833 / OCM 88) (Methanosarcina frisia).